Reading from the N-terminus, the 404-residue chain is Putative Peroxidase 48 (404 aa).

The first 18 residues, 1-18, serve as a signal peptide directing secretion; that stretch reads MRFLGDYKFALLTCSVIA. Intrachain disulfides connect C77-C156, C110-C115, C162-C397, and C241-C273. The Proton acceptor role is filled by H108. Ca(2+) contacts are provided by D109, I112, G114, D116, and S118. A glycan (N-linked (GlcNAc...) asparagine) is linked at N136. A substrate-binding site is contributed by P204. H234 lines the heme b pocket. S235 contacts Ca(2+). A glycan (N-linked (GlcNAc...) asparagine) is linked at N250. The disordered stretch occupies residues 276–307; sequence SVSTSSPSAPPDIGLPPSLPASDSENSYGMSS. The segment covering 283–294 has biased composition (pro residues); the sequence is SAPPDIGLPPSL. D287 contacts Ca(2+). The span at 296-307 shows a compositional bias: polar residues; the sequence is ASDSENSYGMSS.

Belongs to the peroxidase family. Classical plant (class III) peroxidase subfamily. Heme b is required as a cofactor. Requires Ca(2+) as cofactor.

It localises to the secreted. The catalysed reaction is 2 a phenolic donor + H2O2 = 2 a phenolic radical donor + 2 H2O. Its function is as follows. Removal of H(2)O(2), oxidation of toxic reductants, biosynthesis and degradation of lignin, suberization, auxin catabolism, response to environmental stresses such as wounding, pathogen attack and oxidative stress. These functions might be dependent on each isozyme/isoform in each plant tissue. This chain is Putative Peroxidase 48 (PER48), found in Arabidopsis thaliana (Mouse-ear cress).